Consider the following 583-residue polypeptide: Radixin (583 aa).

Residues 5-295 (INVRVTTMDA…GNHELYMRRR (291 aa)) enclose the FERM domain. Residues 60 to 63 (KLNK) and lysine 278 each bind a 1,2-diacyl-sn-glycero-3-phospho-(1D-myo-inositol). Disordered regions lie at residues 310 to 336 (REEK…AEKE) and 436 to 527 (KKKE…VKKQ). Composition is skewed to basic and acidic residues over residues 436–447 (KKKEEEASEWQH) and 455–464 (DLEKTKEELK). A compositionally biased stretch (pro residues) spans 469–480 (APPPPPPPPVIP). Basic and acidic residues-rich tracts occupy residues 483 to 492 (ENEHDEHDEN) and 506 to 525 (MNHR…ERVK).

The protein resides in the cell membrane. It is found in the cytoplasm. It localises to the cytoskeleton. In terms of biological role, probably plays a crucial role in the binding of the barbed end of actin filaments to the plasma membrane. In Gallus gallus (Chicken), this protein is Radixin (RDX).